Consider the following 284-residue polypeptide: Hemin import ATP-binding protein HmuV (284 aa).

Residues 33–266 (LGARHLSKSY…KLLSDVYSYE (234 aa)) form the ABC transporter domain. 65–72 (GPNGAGKS) is a binding site for ATP.

The protein belongs to the ABC transporter superfamily. Heme (hemin) importer (TC 3.A.1.14.5) family. As to quaternary structure, the complex is composed of two ATP-binding proteins (HmuV), two transmembrane proteins (HmuU) and a solute-binding protein (HmuT).

It is found in the cell membrane. In terms of biological role, part of the ABC transporter complex HmuTUV involved in hemin import. Responsible for energy coupling to the transport system. The sequence is that of Hemin import ATP-binding protein HmuV from Thermobifida fusca (strain YX).